The primary structure comprises 288 residues: Quinate/shikimate dehydrogenase (288 aa).

Residues K71 and D107 each contribute to the substrate site. NAD(+) is bound by residues 132 to 135, 155 to 158, K205, 232 to 235, and G255; these read AGGA, NRRD, and CVYN.

It belongs to the shikimate dehydrogenase family. As to quaternary structure, homodimer.

The catalysed reaction is L-quinate + NAD(+) = 3-dehydroquinate + NADH + H(+). It catalyses the reaction L-quinate + NADP(+) = 3-dehydroquinate + NADPH + H(+). The enzyme catalyses shikimate + NADP(+) = 3-dehydroshikimate + NADPH + H(+). It carries out the reaction shikimate + NAD(+) = 3-dehydroshikimate + NADH + H(+). Its pathway is metabolic intermediate biosynthesis; chorismate biosynthesis; chorismate from D-erythrose 4-phosphate and phosphoenolpyruvate: step 4/7. Functionally, the actual biological function of YdiB remains unclear, nor is it known whether 3-dehydroshikimate or quinate represents the natural substrate. Catalyzes the reversible NAD-dependent reduction of both 3-dehydroshikimate (DHSA) and 3-dehydroquinate to yield shikimate (SA) and quinate, respectively. It can use both NAD or NADP for catalysis, however it has higher catalytic efficiency with NAD. In Escherichia coli O1:K1 / APEC, this protein is Quinate/shikimate dehydrogenase.